The sequence spans 1096 residues: DNA-directed RNA polymerase subunit beta (1096 aa).

Residues 1069–1096 form a disordered region; that stretch reads DLMQDVNPRRSTPSRPTYESLGSDYQED.

The protein belongs to the RNA polymerase beta chain family. In terms of assembly, in cyanobacteria the RNAP catalytic core is composed of 2 alpha, 1 beta, 1 beta', 1 gamma and 1 omega subunit. When a sigma factor is associated with the core the holoenzyme is formed, which can initiate transcription.

The catalysed reaction is RNA(n) + a ribonucleoside 5'-triphosphate = RNA(n+1) + diphosphate. In terms of biological role, DNA-dependent RNA polymerase catalyzes the transcription of DNA into RNA using the four ribonucleoside triphosphates as substrates. This is DNA-directed RNA polymerase subunit beta from Prochlorococcus marinus (strain SARG / CCMP1375 / SS120).